Here is a 1171-residue protein sequence, read N- to C-terminus: Protein WWC2 (1171 aa).

WW domains lie at 9–42 (LPLP…DPRD) and 56–89 (NELP…DPRK). Coiled coils occupy residues 120 to 193 (KEQR…YKEQ), 223 to 257 (ELKS…LEEA), and 301 to 420 (LAEK…KSAT). 2 disordered regions span residues 521-552 (SPTA…LSPP) and 603-637 (QALA…KNPD). Over residues 534–551 (PKSVTSLSSLSSLSSLSP) the composition is skewed to low complexity. 2 stretches are compositionally biased toward basic and acidic residues: residues 606-616 (AERKSTGEGLR) and 625-637 (GRTD…KNPD). One can recognise a C2 domain in the interval 684-806 (GAAQAQLILR…FSNDVHTQWY (123 aa)). Coiled coils occupy residues 836 to 870 (LDLD…EQLC) and 1047 to 1123 (DLEL…NAEK).

It belongs to the WWC family.

The protein localises to the cytoplasm. It is found in the cytosol. Functionally, negative regulator of the Hippo signaling pathway, also known as the Salvador-Warts-Hippo (SWH) pathway. The sequence is that of Protein WWC2 (wwc2) from Xenopus tropicalis (Western clawed frog).